Reading from the N-terminus, the 369-residue chain is Small RNA 2'-O-methyltransferase (369 aa).

3 residues coordinate S-adenosyl-L-methionine: Ser39, Asp57, and Ser93. Residues Glu111, Glu114, His115, and His161 each contribute to the Mg(2+) site.

Belongs to the methyltransferase superfamily. HEN1 family. Requires Mg(2+) as cofactor.

It localises to the cytoplasm. The enzyme catalyses small RNA 3'-end nucleotide + S-adenosyl-L-methionine = small RNA 3'-end 2'-O-methylnucleotide + S-adenosyl-L-homocysteine + H(+). Its function is as follows. Methyltransferase that adds a 2'-O-methyl group at the 3'-end of piRNAs, a class of 24 to 30 nucleotide RNAs that are generated by a Dicer-independent mechanism and are primarily derived from transposons and other repeated sequence elements. This probably protects the 3'-end of piRNAs from uridylation activity and subsequent degradation. Stabilization of piRNAs is essential for gametogenesis. This Xenopus tropicalis (Western clawed frog) protein is Small RNA 2'-O-methyltransferase (henmt1).